A 696-amino-acid polypeptide reads, in one-letter code: PWWP domain-containing DNA repair factor 3B (696 aa).

Composition is skewed to polar residues over residues Q119–S128 and C290–M300. Disordered stretches follow at residues Q119–G143 and N278–E303. S128 carries the post-translational modification Phosphoserine. The 62-residue stretch at T392–M453 folds into the PWWP domain.

This sequence belongs to the PWWP3A family.

The chain is PWWP domain-containing DNA repair factor 3B from Homo sapiens (Human).